A 469-amino-acid chain; its full sequence is Repressible acid phosphatase (469 aa).

The signal sequence occupies residues 1 to 16; it reads MLSILLSLLSLSGTHA. N23 and N31 each carry an N-linked (GlcNAc...) asparagine glycan. Catalysis depends on H77, which acts as the Nucleophile. N-linked (GlcNAc...) asparagine glycans are attached at residues N129, N201, N229, N250, and N317. The Proton donor role is filled by D340. N-linked (GlcNAc...) asparagine glycans are attached at residues N392 and N447.

The protein belongs to the histidine acid phosphatase family. Post-translationally, glycosylated during secretion across the membrane.

It localises to the secreted. The enzyme catalyses a phosphate monoester + H2O = an alcohol + phosphate. The chain is Repressible acid phosphatase (PHO5) from Kluyveromyces lactis (strain ATCC 8585 / CBS 2359 / DSM 70799 / NBRC 1267 / NRRL Y-1140 / WM37) (Yeast).